The primary structure comprises 289 residues: tRNA pseudouridine synthase A (289 aa).

Asp67 functions as the Nucleophile in the catalytic mechanism. Position 125 (Tyr125) interacts with substrate.

This sequence belongs to the tRNA pseudouridine synthase TruA family. Homodimer.

It carries out the reaction uridine(38/39/40) in tRNA = pseudouridine(38/39/40) in tRNA. Formation of pseudouridine at positions 38, 39 and 40 in the anticodon stem and loop of transfer RNAs. The polypeptide is tRNA pseudouridine synthase A (Prochlorococcus marinus (strain MIT 9211)).